Here is a 522-residue protein sequence, read N- to C-terminus: MSEDKITGTLAFTVFTAVLGSFQFGYDIGVINAPQEVIISHYRHVLGVPLDDRRATINYDINGTDTPLIVTPAHTTPDAWEEETEGSAHIVTMLWSLSVSSFAVGGMVASFFGGWLGDKLGRIKAMLAANSLSLTGALLMGCSKFGPAHALIIAGRSVSGLYCGLISGLVPMYIGEIAPTTLRGALGTLHQLALVTGILISQIAGLSFILGNQDYWHILLGLSAVPALLQCLLLLFCPESPRYLYLNLEEEVRAKKSLKRLRGTEDITKDINEMRKEKEEASTEQKVSVIQLFTDPNYRQPIVVALMLHLAQQFSGINGIFYYSTSIFQTAGISQPVYATIGVGAINMIFTAVSVLLVEKAGRRTLFLAGMIGMFFCAVFMSLGLVLLDKFTWMSYVSMTAIFLFVSFFEIGPGPIPWFMVAEFFSQGPRPTALALAAFSNWVCNFIIALCFQYIADFLGPYVFFLFAGVVLVFTLFTFFKVPETKGKSFDEIAAEFRKKSGSAPPRKATVQMEFLGSSETV.

At 1–10 (MSEDKITGTL) the chain is on the cytoplasmic side. A helical membrane pass occupies residues 11–31 (AFTVFTAVLGSFQFGYDIGVI). Topologically, residues 32 to 96 (NAPQEVIISH…SAHIVTMLWS (65 aa)) are extracellular. N-linked (GlcNAc...) asparagine glycosylation is present at N62. Residues 97 to 117 (LSVSSFAVGGMVASFFGGWLG) form a helical membrane-spanning segment. Topologically, residues 118–125 (DKLGRIKA) are cytoplasmic. Residues 126–146 (MLAANSLSLTGALLMGCSKFG) form a helical membrane-spanning segment. Residues 147–156 (PAHALIIAGR) are Extracellular-facing. A helical transmembrane segment spans residues 157–177 (SVSGLYCGLISGLVPMYIGEI). The Cytoplasmic portion of the chain corresponds to 178-185 (APTTLRGA). A helical membrane pass occupies residues 186-206 (LGTLHQLALVTGILISQIAGL). Q191 serves as a coordination point for D-glucose. The Extracellular segment spans residues 207–215 (SFILGNQDY). A helical transmembrane segment spans residues 216–236 (WHILLGLSAVPALLQCLLLLF). Residues 237–301 (CPESPRYLYL…LFTDPNYRQP (65 aa)) are Cytoplasmic-facing. Residues 302 to 322 (IVVALMLHLAQQFSGINGIFY) traverse the membrane as a helical segment. Residues 312 to 313 (QQ) and N318 each bind D-glucose. Residues 323-337 (YSTSIFQTAGISQPV) lie on the Extracellular side of the membrane. A helical membrane pass occupies residues 338-358 (YATIGVGAINMIFTAVSVLLV). N347 lines the D-glucose pocket. The Cytoplasmic segment spans residues 359 to 365 (EKAGRRT). Residues 366–386 (LFLAGMIGMFFCAVFMSLGLV) form a helical membrane-spanning segment. At 387-401 (LLDKFTWMSYVSMTA) the chain is on the extracellular side. A helical membrane pass occupies residues 402-422 (IFLFVSFFEIGPGPIPWFMVA). 2 residues coordinate D-glucose: E410 and W418. Topologically, residues 423–431 (EFFSQGPRP) are cytoplasmic. A helical transmembrane segment spans residues 432–452 (TALALAAFSNWVCNFIIALCF). The Extracellular portion of the chain corresponds to 453-459 (QYIADFL). The chain crosses the membrane as a helical span at residues 460 to 480 (GPYVFFLFAGVVLVFTLFTFF). Residues 481-522 (KVPETKGKSFDEIAAEFRKKSGSAPPRKATVQMEFLGSSETV) lie on the Cytoplasmic side of the membrane. Position 521 is a phosphothreonine (T521).

The protein belongs to the major facilitator superfamily. Sugar transporter (TC 2.A.1.1) family. Glucose transporter subfamily. In terms of processing, N-glycosylated; required for stability and retention at the cell surface of pancreatic beta cells. As to expression, present in liver, intestine, kidney and beta-pancreatic islet cells.

The protein resides in the cell membrane. The catalysed reaction is D-glucose(out) = D-glucose(in). The enzyme catalyses D-fructose(out) = D-fructose(in). It carries out the reaction L-dehydroascorbate(out) = L-dehydroascorbate(in). It catalyses the reaction D-galactose(in) = D-galactose(out). D-glucose and maltose competitively inhibit fructose transport. D-glucose, D-fructose and maltose inhibit deoxyglucose transport. Functionally, facilitative hexose transporter that mediates the transport of glucose, fructose and galactose. Likely mediates the bidirectional transfer of glucose across the plasma membrane of hepatocytes and is responsible for uptake of glucose by the beta cells; may comprise part of the glucose-sensing mechanism of the beta cell. May also participate with the Na(+)/glucose cotransporter in the transcellular transport of glucose in the small intestine and kidney. Also able to mediate the transport of dehydroascorbate. This chain is Solute carrier family 2, facilitated glucose transporter member 2, found in Rattus norvegicus (Rat).